A 265-amino-acid polypeptide reads, in one-letter code: Osteoclast-associated immunoglobulin-like receptor (265 aa).

An N-terminal signal peptide occupies residues 1–18 (MVLSLILQLSTLWPACRA). The Extracellular segment spans residues 19–231 (DFTPTAPLAS…LDYTQGNLIR (213 aa)). Ig-like domains follow at residues 22 to 115 (PTAP…SQPS) and 125 to 218 (QLPR…SFEG). N47 carries an N-linked (GlcNAc...) asparagine glycan. Residues C52 and C99 are joined by a disulfide bond. N144 carries an N-linked (GlcNAc...) asparagine glycan. A helical membrane pass occupies residues 232–248 (LGLAGMVLICLGIIVTC). Residues 249–265 (DWHSRSSAFDGLLPQQN) lie on the Cytoplasmic side of the membrane.

Belongs to the leukocyte receptor complex/polymeric immunoglobulin receptor (PIR/LRC) family. As to expression, specifically expressed in preosteoclasts or mature osteoclasts.

It is found in the cell membrane. In terms of biological role, regulator of osteoclastogenesis which plays an important bone-specific function in osteoclast differentiation. This is Osteoclast-associated immunoglobulin-like receptor (Oscar) from Mus musculus (Mouse).